The primary structure comprises 510 residues: 1,3-beta-glucanosyltransferase gas5 (510 aa).

Residues 1–22 form the signal peptide; that stretch reads MNFLHFLTTSLLLLGGSRLALA. Cysteines 70 and 99 form a disulfide. Tyr88 lines the (1,3-beta-D-glucosyl)n pocket. The N-linked (GlcNAc...) asparagine glycan is linked to Asn147. (1,3-beta-D-glucosyl)n is bound by residues Asn158, Glu159, Asp200, and Arg205. Residue Glu159 is the Proton donor of the active site. Intrachain disulfides connect Cys214–Cys353 and Cys232–Cys264. N-linked (GlcNAc...) asparagine glycans are attached at residues Asn216 and Asn252. Glu261 serves as the catalytic Nucleophile. Tyr300 contributes to the (1,3-beta-D-glucosyl)n binding site. Residues Asn318, Asn337, and Asn397 are each glycosylated (N-linked (GlcNAc...) asparagine). A disordered region spans residues 424–456; it reads QSSTSGSSSGSSSASTTASSSSVSSGSSISSGS. Ser485 is lipidated: GPI-anchor amidated serine. A propeptide spans 486–510 (removed in mature form); the sequence is SASTFNLSRFYVFAGILAISGLVFA. An N-linked (GlcNAc...) asparagine glycan is attached at Asn491.

This sequence belongs to the glycosyl hydrolase 72 family. The GPI-anchor is attached to the protein in the endoplasmic reticulum and serves to target the protein to the cell surface. There, the glucosamine-inositol phospholipid moiety is cleaved off and the GPI-modified mannoprotein is covalently attached via its lipidless GPI glycan remnant to the 1,6-beta-glucan of the outer cell wall layer.

The protein resides in the secreted. It is found in the cell wall. It localises to the membrane. Splits internally a 1,3-beta-glucan molecule and transfers the newly generated reducing end (the donor) to the non-reducing end of another 1,3-beta-glucan molecule (the acceptor) forming a 1,3-beta linkage, resulting in the elongation of 1,3-beta-glucan chains in the cell wall. The sequence is that of 1,3-beta-glucanosyltransferase gas5 (gas5) from Schizosaccharomyces pombe (strain 972 / ATCC 24843) (Fission yeast).